The primary structure comprises 84 residues: MKLTCVMIVAVLFLTAWTFVTADDSRYGLKDLFPKERHEMKNPEASKLNQREACYNAGSFCGIHPGLCCSEFCILWCITFVDSG.

The N-terminal stretch at 1–22 (MKLTCVMIVAVLFLTAWTFVTA) is a signal peptide. Residues 23-51 (DDSRYGLKDLFPKERHEMKNPEASKLNQR) constitute a propeptide that is removed on maturation. 3 disulfides stabilise this stretch: Cys54-Cys69, Cys61-Cys73, and Cys68-Cys77. Pro65 is modified (4-hydroxyproline). A Serine amide modification is found at Ser83.

The protein belongs to the conotoxin O1 superfamily. In terms of tissue distribution, expressed by the venom duct.

The protein resides in the secreted. Its function is as follows. Delta-conotoxins bind to site 6 of voltage-gated sodium channels (Nav) and inhibit the inactivation process. In Conus magus (Magical cone), this protein is Delta-conotoxin-like MVIB.